A 588-amino-acid polypeptide reads, in one-letter code: Adenine deaminase (588 aa).

It belongs to the metallo-dependent hydrolases superfamily. Adenine deaminase family. As to quaternary structure, homodimer. It depends on Mn(2+) as a cofactor.

It carries out the reaction adenine + H2O + H(+) = hypoxanthine + NH4(+). In Escherichia coli (strain K12 / DH10B), this protein is Adenine deaminase.